The sequence spans 649 residues: MTKETIRVVICGDDGVGKTSLIVSLVKGQFIPNLQAVLPPVTIPRDFSSSPYSPKNTVLIDTDNSDPLAIQRELKNADVIWLVYSDKDSYERISLYWMITFRSLGLNIPVILCKNKCDQYTTNSPLEDFLDTKIEDEEFIPILMAFKEVDTCVKASAKTHFDVNQSFYLCQRSISYPISPLFDAKVGDLKPSAVAALSRIFFLSDEDQDGFLNDNEIMDLQRKCFGKSIDLNELNFIKHTLSDLTSSEEYPSEILYCQGKGLTKQGFIALNKIYTEKGRHETTWGILRAFNYTDSLSIDDAVLFPKVNVPEQASVELSSKGYRFLVDIFIKFDSDNDGALNDTELHTLFRSTPGLPNLWLETNFPASTVVNAKGFVTLQGWLAQWTMTTYLDYKITTAYLVYLGFQEDAKLAVQITKSRRMRRRQGRLYRSYVTDRKVFNCFVVGKRNSGKSSLLESFLGRLFSEAYSPTIRPRVAVNNVEVTGDKQYYLILQEFGEQEEAILQNPSRLAECDVLCLTYDSSDPESFSYLLELLTNNEIMKDIPVVFVALKADLDKQQQRCKFQPDEFTDTLYLDHPLHVSSTWSSSLNQLFKKIIQASLEPGKFTPGFPPDIKPTNIDYSSAVILGSSIGFLALFSYTMIKLLKPTQQ.

The Cytoplasmic portion of the chain corresponds to 1–623 (MTKETIRVVI…KPTNIDYSSA (623 aa)). Residues 3-176 (KETIRVVICG…FYLCQRSISY (174 aa)) form the Miro 1 domain. GTP contacts are provided by residues 12–19 (GDDGVGKT), 61–63 (DTD), and 115–118 (NKCD). 2 EF-hand domains span residues 192–227 (SAVAALSRIFFLSDEDQDGFLNDNEIMDLQRKCFGK) and 320–355 (KGYRFLVDIFIKFDSDNDGALNDTELHTLFRSTPGL). Residues Asp-205, Asp-207, Asp-209, Glu-216, Asp-333, Asp-335, Asp-337, and Glu-344 each contribute to the Ca(2+) site. Residues 436-601 (RKVFNCFVVG…FKKIIQASLE (166 aa)) enclose the Miro 2 domain. GTP contacts are provided by residues 445–452 (GKRNSGKS), 481–485 (EVTGD), and 550–553 (LKAD). Residues 624–644 (VILGSSIGFLALFSYTMIKLL) traverse the membrane as a helical; Anchor for type IV membrane protein segment. Residues 645–649 (KPTQQ) are Mitochondrial intermembrane-facing.

Belongs to the mitochondrial Rho GTPase family.

It localises to the mitochondrion outer membrane. Functionally, mitochondrial GTPase involved in mitochondrial trafficking. Probably involved in control of anterograde transport of mitochondria and their subcellular distribution. In Candida glabrata (strain ATCC 2001 / BCRC 20586 / JCM 3761 / NBRC 0622 / NRRL Y-65 / CBS 138) (Yeast), this protein is Mitochondrial Rho GTPase 1 (GEM1).